A 387-amino-acid polypeptide reads, in one-letter code: Pepsin II-2/3 (387 aa).

An N-terminal signal peptide occupies residues 1-15; it reads MKWLLLLGLLALSEC. Residues 16-59 constitute a propeptide, activation peptide; it reads IVHKVPLVRKKSLRKNLIEKGLLQDYLKTHTPNPATKYFPKETF. The 310-residue stretch at 75–384 folds into the Peptidase A1 domain; the sequence is YFGTISIGTP…DRANNQLGLA (310 aa). Residue aspartate 93 is part of the active site. Cysteines 106 and 111 form a disulfide. Residue serine 129 is modified to Phosphoserine. Cysteine 267 and cysteine 271 are disulfide-bonded. The active site involves aspartate 276. A disulfide bridge links cysteine 310 with cysteine 343.

It belongs to the peptidase A1 family.

It is found in the secreted. It carries out the reaction Preferential cleavage: hydrophobic, preferably aromatic, residues in P1 and P1' positions. Cleaves 1-Phe-|-Val-2, 4-Gln-|-His-5, 13-Glu-|-Ala-14, 14-Ala-|-Leu-15, 15-Leu-|-Tyr-16, 16-Tyr-|-Leu-17, 23-Gly-|-Phe-24, 24-Phe-|-Phe-25 and 25-Phe-|-Tyr-26 bonds in the B chain of insulin.. In terms of biological role, shows particularly broad specificity; although bonds involving phenylalanine and leucine are preferred, many others are also cleaved to some extent. This chain is Pepsin II-2/3, found in Oryctolagus cuniculus (Rabbit).